A 792-amino-acid polypeptide reads, in one-letter code: Ribonucleoside-diphosphate reductase large subunit (792 aa).

Residues T200, S215–C216, G246, N415–E419, and P606–T610 contribute to the substrate site. A disulfide bridge connects residues C216 and C431. N415 serves as the catalytic Proton acceptor. Residue C417 is the Cysteine radical intermediate of the active site. E419 serves as the catalytic Proton acceptor. The disordered stretch occupies residues S758 to S781.

The protein belongs to the ribonucleoside diphosphate reductase large chain family. As to quaternary structure, heterotetramer composed of a homodimer of the large subunit (R1) and a homodimer of the small subunit (R2). Larger multisubunit protein complex are also active, composed of (R1)n(R2)n.

The enzyme catalyses a 2'-deoxyribonucleoside 5'-diphosphate + [thioredoxin]-disulfide + H2O = a ribonucleoside 5'-diphosphate + [thioredoxin]-dithiol. Functionally, ribonucleoside-diphosphate reductase holoenzyme provides the precursors necessary for viral DNA synthesis. Allows virus growth in non-dividing cells, as well as reactivation from latency in infected hosts. Catalyzes the biosynthesis of deoxyribonucleotides from the corresponding ribonucleotides. In Human herpesvirus 8 type P (isolate GK18) (HHV-8), this protein is Ribonucleoside-diphosphate reductase large subunit.